Here is a 355-residue protein sequence, read N- to C-terminus: Uroporphyrinogen decarboxylase (355 aa).

Residues 27–31, Asp77, Tyr154, Thr209, and His328 each bind substrate; that span reads RQAGR.

The protein belongs to the uroporphyrinogen decarboxylase family. Homodimer.

The protein localises to the cytoplasm. It catalyses the reaction uroporphyrinogen III + 4 H(+) = coproporphyrinogen III + 4 CO2. Its pathway is porphyrin-containing compound metabolism; protoporphyrin-IX biosynthesis; coproporphyrinogen-III from 5-aminolevulinate: step 4/4. Catalyzes the decarboxylation of four acetate groups of uroporphyrinogen-III to yield coproporphyrinogen-III. This Aliivibrio fischeri (strain ATCC 700601 / ES114) (Vibrio fischeri) protein is Uroporphyrinogen decarboxylase.